A 433-amino-acid chain; its full sequence is Serine/threonine-protein kinase KDX1 (433 aa).

Positions 23–318 (FHLTGKIGRG…VEDALEHPYL (296 aa)) constitute a Protein kinase domain. ATP-binding positions include 29–37 (IGRGSHSLI) and Lys-55. The active-site Proton acceptor is Asp-153.

This sequence belongs to the protein kinase superfamily. Ser/Thr protein kinase family. In terms of assembly, interacts with RLM1.

It carries out the reaction L-seryl-[protein] + ATP = O-phospho-L-seryl-[protein] + ADP + H(+). The enzyme catalyses L-threonyl-[protein] + ATP = O-phospho-L-threonyl-[protein] + ADP + H(+). In terms of biological role, serine/threonine-protein kinase involved in the SLT2 mitogen-activated (MAP) kinase signaling pathway that regulates cell wall integrity. May also be involved in the mating pheromone and the CWI MAPK pathways. In Saccharomyces cerevisiae (strain ATCC 204508 / S288c) (Baker's yeast), this protein is Serine/threonine-protein kinase KDX1 (KDX1).